A 74-amino-acid chain; its full sequence is UPF0435 protein GK0418 (74 aa).

Belongs to the UPF0435 family.

In Geobacillus kaustophilus (strain HTA426), this protein is UPF0435 protein GK0418.